The chain runs to 210 residues: Calcium-activated potassium channel subunit beta-4 (210 aa).

Residues 1 to 19 (MAKLRVAYEYTEAEDKSIR) lie on the Cytoplasmic side of the membrane. A helical membrane pass occupies residues 20–40 (LGLFLIISGVVSLFIFGFCWL). Over 41-167 (SPALQDLQAT…DVLLHRTHDE (127 aa)) the chain is Extracellular. Asn-53 and Asn-90 each carry an N-linked (GlcNAc...) asparagine glycan. Residues 168 to 188 (IVLLHCFLWPLVTFVVGVLIV) form a helical membrane-spanning segment. Over 189-210 (VLTICAKSLAVKAEAMKKRKFS) the chain is Cytoplasmic.

This sequence belongs to the KCNMB (TC 8.A.14.1) family. KCNMB4 subfamily. Interacts with KCNMA1 tetramer. There are probably 4 molecules of KCMNB4 per KCNMA1 tetramer. Interacts with FMR1 (via N-terminus). Phosphorylated. Phosphorylation modulates its effect on KCNMA1 activation kinetics. Post-translationally, N-glycosylated. A highly glycosylated form is promoted by KCNMA1. Glycosylation, which is not required for the interaction with KCNMA1 and subcellular location, increases protection against charybdotoxin. In terms of tissue distribution, predominantly expressed in brain. In brain, it is expressed in the cerebellum, cerebral cortex, medulla, spinal cord, occipital pole, frontal lobe, temporal lobe, putamen, amygdala, caudate nucleus, corpus callosum, hippocampus, substantia nigra and thalamus. Weakly or not expressed in other tissues.

The protein resides in the membrane. In terms of biological role, regulatory subunit of the calcium activated potassium KCNMA1 (maxiK) channel. Modulates the calcium sensitivity and gating kinetics of KCNMA1, thereby contributing to KCNMA1 channel diversity. Decreases the gating kinetics and calcium sensitivity of the KCNMA1 channel, but with fast deactivation kinetics. May decrease KCNMA1 channel openings at low calcium concentrations but increases channel openings at high calcium concentrations. Makes KCNMA1 channel resistant to 100 nM charybdotoxin (CTX) toxin concentrations. The protein is Calcium-activated potassium channel subunit beta-4 (KCNMB4) of Homo sapiens (Human).